The following is a 156-amino-acid chain: Aspartate 1-decarboxylase (156 aa).

Ser26 acts as the Schiff-base intermediate with substrate; via pyruvic acid in catalysis. At Ser26 the chain carries Pyruvic acid (Ser). Thr58 contacts substrate. The active-site Proton donor is the Tyr59. A substrate-binding site is contributed by 74–76; the sequence is GGA.

Belongs to the PanD family. In terms of assembly, heterooctamer of four alpha and four beta subunits. Requires pyruvate as cofactor. Is synthesized initially as an inactive proenzyme, which is activated by self-cleavage at a specific serine bond to produce a beta-subunit with a hydroxyl group at its C-terminus and an alpha-subunit with a pyruvoyl group at its N-terminus.

The protein resides in the cytoplasm. It catalyses the reaction L-aspartate + H(+) = beta-alanine + CO2. The protein operates within cofactor biosynthesis; (R)-pantothenate biosynthesis; beta-alanine from L-aspartate: step 1/1. Functionally, catalyzes the pyruvoyl-dependent decarboxylation of aspartate to produce beta-alanine. The protein is Aspartate 1-decarboxylase of Gloeothece citriformis (strain PCC 7424) (Cyanothece sp. (strain PCC 7424)).